The chain runs to 311 residues: Probable flavin reductase (311 aa).

FMN is bound by residues 38–41 (TANS), 55–61 (CLAKSSR), 88–89 (FA), and Arg-95.

This sequence belongs to the non-flavoprotein flavin reductase family.

The protein is Probable flavin reductase of Rhizobium meliloti (strain 1021) (Ensifer meliloti).